A 538-amino-acid polypeptide reads, in one-letter code: Probable inorganic phosphate transporter 1-4 (538 aa).

Residues methionine 1 to alanine 23 are Cytoplasmic-facing. Residues isoleucine 24–valine 44 form a helical membrane-spanning segment. Residues threonine 45–serine 69 are Extracellular-facing. Residues alanine 70 to leucine 90 form a helical membrane-spanning segment. Over glycine 91 to lysine 98 the chain is Cytoplasmic. The chain crosses the membrane as a helical span at residues valine 99–glycine 119. The Extracellular segment spans residues serine 120 to lysine 123. The chain crosses the membrane as a helical span at residues glycine 124–tyrosine 144. Topologically, residues proline 145 to phenylalanine 163 are cytoplasmic. Residues isoleucine 164–isoleucine 184 traverse the membrane as a helical segment. At valine 185–alanine 210 the chain is on the extracellular side. Residues aspartate 211–tryptophan 231 form a helical membrane-spanning segment. The Cytoplasmic segment spans residues arginine 232 to histidine 294. Residues leucine 295 to phenylalanine 315 form a helical membrane-spanning segment. The Extracellular portion of the chain corresponds to glutamine 316–threonine 346. A helical membrane pass occupies residues leucine 347 to isoleucine 367. At glycine 368 to arginine 369 the chain is on the cytoplasmic side. A helical membrane pass occupies residues phenylalanine 370–proline 390. Over tyrosine 391 to threonine 396 the chain is Extracellular. Residues proline 397 to glycine 417 form a helical membrane-spanning segment. Topologically, residues proline 418–glycine 440 are cytoplasmic. Residues isoleucine 441–alanine 461 form a helical membrane-spanning segment. Over glutamine 462 to asparagine 481 the chain is Extracellular. The helical transmembrane segment at serine 482–glutamate 502 threads the bilayer. Over serine 503–alanine 538 the chain is Cytoplasmic. The interval serine 507–alanine 538 is disordered. Acidic residues predominate over residues leucine 511–proline 522.

This sequence belongs to the major facilitator superfamily. Phosphate:H(+) symporter (TC 2.A.1.9) family. In terms of tissue distribution, expressed at low levels in roots.

It is found in the membrane. Its function is as follows. High-affinity transporter for external inorganic phosphate. This chain is Probable inorganic phosphate transporter 1-4 (PHT1-4), found in Oryza sativa subsp. japonica (Rice).